The sequence spans 382 residues: F-box/kelch-repeat protein KIB1 (382 aa).

The F-box domain maps to Ser22–Thr69. Kelch repeat units lie at residues Ile73 to Gly117, Val159 to Asn209, and Ile259 to Glu306.

As to quaternary structure, part of a SCF (SKP1-cullin-F-box) protein ligase complex. Binds directly to several GSK3 family proteins such as SKP1A/ASK1, ASK1/SK11, ASK3/SK12, ASK5/SK13, ASK7/BIN2/SK21, ASK9/SK22 and ASK6/SK23. Interacts with ASK7/BIN2/SK21 in a brassinosteroid (BR)-dependent manner. As to expression, expressed in seedlings, leaves, stems, flower buds and flowers.

It is found in the cytoplasm. The protein resides in the nucleus. It localises to the nucleolus. Component of SCF(ASK-cullin-F-box) E3 ubiquitin ligase complexes, which may mediate the ubiquitination and subsequent proteasomal degradation of target proteins. Required for brassinosteroid (BR) signal transduction. Mediates ASK7/BIN2/SK21 inactivation both by competing with substrate binding (e.g. BZR1) and by promoting its ubiquitination and subsequent proteasomal degradation. In Arabidopsis thaliana (Mouse-ear cress), this protein is F-box/kelch-repeat protein KIB1.